The sequence spans 168 residues: Photosystem I assembly protein Ycf3 (168 aa).

3 TPR repeats span residues 35-68 (AFTY…EMDP), 72-105 (SYIL…NPFL), and 120-153 (GEQA…TPGN).

The protein belongs to the Ycf3 family.

The protein localises to the plastid. The protein resides in the chloroplast thylakoid membrane. Its function is as follows. Essential for the assembly of the photosystem I (PSI) complex. May act as a chaperone-like factor to guide the assembly of the PSI subunits. This Plantago lanceolata (English plantain) protein is Photosystem I assembly protein Ycf3.